The chain runs to 282 residues: Pantothenate synthetase (282 aa).

31 to 38 (MGALHDGH) contacts ATP. His38 functions as the Proton donor in the catalytic mechanism. Gln62 provides a ligand contact to (R)-pantoate. Gln62 lines the beta-alanine pocket. An ATP-binding site is contributed by 148–151 (GKKD). Gln154 serves as a coordination point for (R)-pantoate. Residues Val177 and 185 to 188 (KSSR) each bind ATP.

The protein belongs to the pantothenate synthetase family. As to quaternary structure, homodimer.

It is found in the cytoplasm. The enzyme catalyses (R)-pantoate + beta-alanine + ATP = (R)-pantothenate + AMP + diphosphate + H(+). It participates in cofactor biosynthesis; (R)-pantothenate biosynthesis; (R)-pantothenate from (R)-pantoate and beta-alanine: step 1/1. Its function is as follows. Catalyzes the condensation of pantoate with beta-alanine in an ATP-dependent reaction via a pantoyl-adenylate intermediate. The protein is Pantothenate synthetase of Staphylococcus saprophyticus subsp. saprophyticus (strain ATCC 15305 / DSM 20229 / NCIMB 8711 / NCTC 7292 / S-41).